We begin with the raw amino-acid sequence, 405 residues long: Cystathionine gamma-lyase (405 aa).

Residues R62, Y114, and R119 each contribute to the substrate site. An N6-(pyridoxal phosphate)lysine modification is found at K212. E339 lines the substrate pocket.

It belongs to the trans-sulfuration enzymes family. Homotetramer. Interacts with CALM in a calcium-dependent manner. Pyridoxal 5'-phosphate is required as a cofactor. As to expression, highly expressed in liver. Also in muscle and lower expression in most tissues except heart, pituitary gland, spleen, thymus, and vascular tissue, where it is hardly detected.

It is found in the cytoplasm. It carries out the reaction L,L-cystathionine + H2O = 2-oxobutanoate + L-cysteine + NH4(+). It catalyses the reaction L-cysteine + H2O = hydrogen sulfide + pyruvate + NH4(+) + H(+). The enzyme catalyses L-homocysteine + H2O = 2-oxobutanoate + hydrogen sulfide + NH4(+) + H(+). The catalysed reaction is L-homoserine = 2-oxobutanoate + NH4(+). It carries out the reaction L-selenocystathionine + H2O = L-selenocysteine + 2-oxobutanoate + NH4(+). It participates in amino-acid biosynthesis; L-cysteine biosynthesis; L-cysteine from L-homocysteine and L-serine: step 2/2. With respect to regulation, inhibited by propargylglycine, trifluoroalanine and aminoethoxyvinylglycine. In terms of biological role, catalyzes the last step in the trans-sulfuration pathway from L-methionine to L-cysteine in a pyridoxal-5'-phosphate (PLP)-dependent manner, which consists on cleaving the L,L-cystathionine molecule into L-cysteine, ammonia and 2-oxobutanoate. Part of the L-cysteine derived from the trans-sulfuration pathway is utilized for biosynthesis of the ubiquitous antioxidant glutathione. Besides its role in the conversion of L-cystathionine into L-cysteine, it utilizes L-cysteine and L-homocysteine as substrates (at much lower rates than L,L-cystathionine) to produce the endogenous gaseous signaling molecule hydrogen sulfide (H2S). In vitro, it converts two L-cysteine molecules into lanthionine and H2S, also two L-homocysteine molecules to homolanthionine and H2S, which can be particularly relevant under conditions of severe hyperhomocysteinemia (which is a risk factor for cardiovascular disease, diabetes, and Alzheimer's disease). Lanthionine and homolanthionine are structural homologs of L,L-cystathionine that differ by the absence or presence of an extra methylene group, respectively. Acts as a cysteine-protein sulfhydrase by mediating sulfhydration of target proteins: sulfhydration consists of converting -SH groups into -SSH on specific cysteine residues of target proteins such as GAPDH, PTPN1 and NF-kappa-B subunit RELA, thereby regulating their function. By generating the gasotransmitter H2S, it participates in a number of physiological processes such as vasodilation, bone protection, and inflammation. Plays an essential role in myogenesis by contributing to the biogenesis of H2S in skeletal muscle tissue. Can also accept homoserine as substrate. Catalyzes the elimination of selenocystathionine (which can be derived from the diet) to yield selenocysteine, ammonia and 2-oxobutanoate. This is Cystathionine gamma-lyase (CTH) from Homo sapiens (Human).